Here is a 141-residue protein sequence, read N- to C-terminus: Hemoglobin subunit alpha-A (141 aa).

Residues 1 to 141 enclose the Globin domain; sequence VLSASDKSNV…VGTVLTAKYR (141 aa). Residue H58 coordinates O2. H87 contributes to the heme b binding site.

It belongs to the globin family. In terms of assembly, heterotetramer of two alpha chains and two beta chains. Red blood cells.

Its function is as follows. Involved in oxygen transport from the lung to the various peripheral tissues. The chain is Hemoglobin subunit alpha-A (HBAA) from Streptopelia orientalis (Eastern turtle dove).